We begin with the raw amino-acid sequence, 427 residues long: Trigger factor (427 aa).

In terms of domain architecture, PPIase FKBP-type spans 163–248; it reads GDTVVIDFVG…IHEVKTKEVP (86 aa).

It belongs to the FKBP-type PPIase family. Tig subfamily.

It localises to the cytoplasm. It catalyses the reaction [protein]-peptidylproline (omega=180) = [protein]-peptidylproline (omega=0). In terms of biological role, involved in protein export. Acts as a chaperone by maintaining the newly synthesized protein in an open conformation. Functions as a peptidyl-prolyl cis-trans isomerase. The sequence is that of Trigger factor from Streptococcus pyogenes serotype M18 (strain MGAS8232).